Consider the following 440-residue polypeptide: Transposon Ty1-GR2 Gag polyprotein (440 aa).

Low complexity predominate over residues 1–16 (MESQQLSQHSHISHGS). 3 disordered regions span residues 1 to 93 (MESQ…MMTQ), 126 to 173 (PQSQ…RPPP), and 352 to 440 (GSRN…PGTY). 2 stretches are compositionally biased toward polar residues: residues 48 to 60 (TKANSQQTTTPAS) and 127 to 152 (QSQFPQYPSSVGTPLSTPSPESGNTF). Residues 153-165 (TDSSSADSDMTST) show a composition bias toward low complexity. An RNA-binding region spans residues 299–401 (NNGIHINNKV…NSKSKTARAH (103 aa)). Residues 402–418 (NVSTSNNSPSTDNDSIS) are compositionally biased toward low complexity. Residue serine 416 is modified to Phosphoserine. The span at 419 to 428 (KSTTEPIQLN) shows a compositional bias: polar residues. Basic and acidic residues predominate over residues 429-440 (NKHDLHLRPGTY).

As to quaternary structure, homotrimer.

The protein localises to the cytoplasm. Capsid protein (CA) is the structural component of the virus-like particle (VLP), forming the shell that encapsulates the retrotransposons dimeric RNA genome. The particles are assembled from trimer-clustered units and there are holes in the capsid shells that allow for the diffusion of macromolecules. CA also has nucleocapsid-like chaperone activity, promoting primer tRNA(i)-Met annealing to the multipartite primer-binding site (PBS), dimerization of Ty1 RNA and initiation of reverse transcription. In Saccharomyces cerevisiae (strain ATCC 204508 / S288c) (Baker's yeast), this protein is Transposon Ty1-GR2 Gag polyprotein (TY1A-GR2).